The primary structure comprises 477 residues: Aspartyl/glutamyl-tRNA(Asn/Gln) amidotransferase subunit B (477 aa).

Belongs to the GatB/GatE family. GatB subfamily. As to quaternary structure, heterotrimer of A, B and C subunits.

The catalysed reaction is L-glutamyl-tRNA(Gln) + L-glutamine + ATP + H2O = L-glutaminyl-tRNA(Gln) + L-glutamate + ADP + phosphate + H(+). It carries out the reaction L-aspartyl-tRNA(Asn) + L-glutamine + ATP + H2O = L-asparaginyl-tRNA(Asn) + L-glutamate + ADP + phosphate + 2 H(+). In terms of biological role, allows the formation of correctly charged Asn-tRNA(Asn) or Gln-tRNA(Gln) through the transamidation of misacylated Asp-tRNA(Asn) or Glu-tRNA(Gln) in organisms which lack either or both of asparaginyl-tRNA or glutaminyl-tRNA synthetases. The reaction takes place in the presence of glutamine and ATP through an activated phospho-Asp-tRNA(Asn) or phospho-Glu-tRNA(Gln). In Clostridium tetani (strain Massachusetts / E88), this protein is Aspartyl/glutamyl-tRNA(Asn/Gln) amidotransferase subunit B.